The sequence spans 136 residues: Sec-independent protein translocase protein TatB (136 aa).

A helical membrane pass occupies residues 2-22 (FGSVGWGELLVLLIVGLVVLG). The segment at 107–136 (VTEPAPTPIVNPELAKPAEPGPTRYDADAT) is disordered.

Belongs to the TatB family. As to quaternary structure, the Tat system comprises two distinct complexes: a TatABC complex, containing multiple copies of TatA, TatB and TatC subunits, and a separate TatA complex, containing only TatA subunits. Substrates initially bind to the TatABC complex, which probably triggers association of the separate TatA complex to form the active translocon.

Its subcellular location is the cell membrane. Part of the twin-arginine translocation (Tat) system that transports large folded proteins containing a characteristic twin-arginine motif in their signal peptide across membranes. Together with TatC, TatB is part of a receptor directly interacting with Tat signal peptides. TatB may form an oligomeric binding site that transiently accommodates folded Tat precursor proteins before their translocation. This is Sec-independent protein translocase protein TatB from Mycobacteroides abscessus (strain ATCC 19977 / DSM 44196 / CCUG 20993 / CIP 104536 / JCM 13569 / NCTC 13031 / TMC 1543 / L948) (Mycobacterium abscessus).